Reading from the N-terminus, the 488-residue chain is 5'-3' exonuclease PLD3 (488 aa).

Over 1-38 (MKPKLMYQELKVPVEEPAGELPMNEIEAWKAAEKKARW) the chain is Cytoplasmic. The helical; Signal-anchor for type II membrane protein transmembrane segment at 39–59 (VLLVLILAVVGFGALMTQLFL) threads the bilayer. Topologically, residues 60-488 (WEYGDLHLFG…DSVGNACRLL (429 aa)) are lumenal. Intrachain disulfides connect cysteine 77/cysteine 237 and cysteine 81/cysteine 235. Asparagine 97 and asparagine 132 each carry an N-linked (GlcNAc...) asparagine glycan. The PLD phosphodiesterase 1 domain maps to 194–221 (THGVLHTKFWVVDQTHFYLGSANMDWRS). Active-site residues include histidine 199, lysine 201, and aspartate 206. Residue histidine 199 is the Proton donor of the active site. 2 residues coordinate phosphate: histidine 199 and lysine 201. Asparagine 216 serves as a coordination point for phosphate. Residues asparagine 234, asparagine 282, and asparagine 385 are each glycosylated (N-linked (GlcNAc...) asparagine). A disulfide bridge links cysteine 364 with cysteine 485. In terms of domain architecture, PLD phosphodiesterase 2 spans 409–435 (YARVNHNKYMVTERTTYIGTSNWSGSY). Histidine 414 contacts phosphate. Residue histidine 414 is the Nucleophile of the active site. Mg(2+) is bound at residue phenylalanine 436.

This sequence belongs to the phospholipase D family. In terms of assembly, homodimer. Interacts with APP. In terms of processing, N-glycosylated. Post-translationally, proteolytically processed to a soluble form that is stable within endosomes and lysosomes. During transport through the secretory pathway becomes proteolysed by cysteine proteases, thereby releasing a stable soluble lysosomal lumenal polypeptide, whereas the transmembrane-bound fragment is rapidly degraded. Its transport route to lysosomes involves ubiquitination and the ESCRT complex. Ubiquitinated. Ubiquitination mediates sorting into lysosomes.

Its subcellular location is the endoplasmic reticulum membrane. The protein resides in the lysosome lumen. The protein localises to the early endosome membrane. It localises to the late endosome membrane. It is found in the golgi apparatus membrane. Its subcellular location is the endosome membrane. It carries out the reaction Exonucleolytic cleavage in the 5'- to 3'-direction to yield nucleoside 3'-phosphates.. The catalysed reaction is a 5'-end 5'-dephospho-ribonucleotidyl-ribonucleotide-RNA + H2O = a ribonucleoside 3'-phosphate + a 5'-end dephospho-ribonucleoside-RNA + H(+). The enzyme catalyses a ribonucleoside 3'-phosphate-2'-3'-cyclophospho-GMP + H2O = a ribonucleoside 3'-phosphate + 2',3'-cyclophospho-GMP + H(+). It catalyses the reaction a 5'-end 5'-dephospho-2'-deoxyribonucleotidyl-2'-deoxyribonucleotide in single-stranded DNA + H2O = a 5'-end dephospho-2'-deoxyribonucleoside in single-stranded DNA + a 2'-deoxyribonucleoside 3'-phosphate + H(+). It carries out the reaction a 5'-end 5'-phospho-2'-deoxyribonucleotide in single-stranded DNA + H2O = a 5'-end 5'-dephospho-2'-deoxyribonucleotide in single-stranded DNA + phosphate. The catalysed reaction is a 3-lyso-sn-glycero-1-phospho-(3'-acyl-1'-sn-glycerol) + a 1-acyl-sn-glycerol = a 3-acyl-sn-glycero-1-phospho-(3'-acyl-1'-sn-glycerol) + glycerol. The enzyme catalyses 3-lyso-sn-glycero-1-phospho-(3'-(9Z-octadecenoyl)-1'-sn-glycerol) + 1-(9Z-octadecenoyl)-sn-glycerol = 3-(9Z-octadecenoyl)-sn-glycero-1-phospho-(3'-(9Z-octadecenoyl)-1'-sn-glycerol) + glycerol. 5'-&gt;3' exonuclease that hydrolyzes the phosphodiester bond of single-stranded DNA (ssDNA) and RNA molecules to form nucleoside 3'-monophosphates and 5'-end 5'-hydroxy deoxyribonucleotide/ribonucleotide fragments. Partially redundant with PLD4, can cleave all four nucleotides displaying higher efficiency for ssDNA and RNA fragments initiated with uridine and guanosine residues and lower efficiency for cytidine-initiated substrates. As a result, it does not always degrade polynucleotides to the single nucleotide level, it can stall at specific sites sparing certain fragments from exonucleolytic degradation. Processes self and pathogenic ssDNA and RNA molecules that reach the endolysosomal compartment via phagocytosis or autophagy and may serve as 'danger' signals for recognition by innate immune receptors such as toll-like receptors (TLRs). Degrades mitochondrial CpG-rich ssDNA fragments to prevent TLR9 activation and autoinflammatory response, but it can cleave viral RNA to generate ligands for TLR7 activation and initiate antiviral immune responses. In plasmacytoid dendritic cells, it cooperates with endonuclease RNASET2 to release 2',3'-cyclic guanosine monophosphate (2',3'-cGMP), a potent stimulatory ligand for TLR7. Produces 2',3'-cGMPs and cytidine-rich RNA fragments that occupy TLR7 ligand-binding pockets and trigger a signaling-competent state. Can exert polynucleotide phosphatase activity toward 5'-phosphorylated ssDNA substrates although at a slow rate. Transphosphatidylase that catalyzes the exchange with R to S stereo-inversion of the glycerol moiety between (S,R)-lysophosphatidylglycerol (LPG) and monoacylglycerol (MAG) substrates to yield (S,S)-bis(monoacylglycero)phosphate (BMP). Can synthesize a variety of (S,S)-BMPs representing the main phospholipid constituent of lysosomal intralumenal vesicle (ILV) membranes that bind acid hydrolases for lipid degradation. Regulates the homeostasis and interorganellar communication of the endolysosomal system with an overall impact on cellular removal of dysfunctional organelles via autophagy as well as proper protein and lipid turnover. May play a role in myotube formation in response to ER stress. This chain is 5'-3' exonuclease PLD3 (Pld3), found in Rattus norvegicus (Rat).